The primary structure comprises 177 residues: Adenine phosphoribosyltransferase (177 aa).

The protein belongs to the purine/pyrimidine phosphoribosyltransferase family. As to quaternary structure, homodimer.

The protein resides in the cytoplasm. It carries out the reaction AMP + diphosphate = 5-phospho-alpha-D-ribose 1-diphosphate + adenine. It participates in purine metabolism; AMP biosynthesis via salvage pathway; AMP from adenine: step 1/1. Catalyzes a salvage reaction resulting in the formation of AMP, that is energically less costly than de novo synthesis. The chain is Adenine phosphoribosyltransferase from Chlorobium phaeobacteroides (strain BS1).